Consider the following 273-residue polypeptide: Putative phosphoenolpyruvate synthase regulatory protein (273 aa).

153 to 160 contributes to the ADP binding site; that stretch reads GVSRSGKT.

It belongs to the pyruvate, phosphate/water dikinase regulatory protein family. PSRP subfamily.

The enzyme catalyses [pyruvate, water dikinase] + ADP = [pyruvate, water dikinase]-phosphate + AMP + H(+). It carries out the reaction [pyruvate, water dikinase]-phosphate + phosphate + H(+) = [pyruvate, water dikinase] + diphosphate. Its function is as follows. Bifunctional serine/threonine kinase and phosphorylase involved in the regulation of the phosphoenolpyruvate synthase (PEPS) by catalyzing its phosphorylation/dephosphorylation. In Polaromonas sp. (strain JS666 / ATCC BAA-500), this protein is Putative phosphoenolpyruvate synthase regulatory protein.